Consider the following 320-residue polypeptide: Ferrochelatase (320 aa).

2 residues coordinate Fe cation: H194 and E275.

The protein belongs to the ferrochelatase family.

It is found in the cytoplasm. The catalysed reaction is heme b + 2 H(+) = protoporphyrin IX + Fe(2+). It participates in porphyrin-containing compound metabolism; protoheme biosynthesis; protoheme from protoporphyrin-IX: step 1/1. In terms of biological role, catalyzes the ferrous insertion into protoporphyrin IX. This Serratia proteamaculans (strain 568) protein is Ferrochelatase.